The sequence spans 156 residues: Small ribosomal subunit protein uS7 (156 aa).

The protein belongs to the universal ribosomal protein uS7 family. As to quaternary structure, part of the 30S ribosomal subunit. Contacts proteins S9 and S11.

One of the primary rRNA binding proteins, it binds directly to 16S rRNA where it nucleates assembly of the head domain of the 30S subunit. Is located at the subunit interface close to the decoding center, probably blocks exit of the E-site tRNA. The polypeptide is Small ribosomal subunit protein uS7 (Lachnospira eligens (strain ATCC 27750 / DSM 3376 / VPI C15-48 / C15-B4) (Eubacterium eligens)).